We begin with the raw amino-acid sequence, 1027 residues long: Exportin-T (1027 aa).

It belongs to the exportin family.

The protein resides in the nucleus. It localises to the cytoplasm. Its function is as follows. tRNA nucleus export receptor which facilitates tRNA translocation across the nuclear pore complex. Involved in pre-tRNA splicing, probably by affecting the interaction of pre-tRNA with splicing endonuclease. This Pyricularia oryzae (strain 70-15 / ATCC MYA-4617 / FGSC 8958) (Rice blast fungus) protein is Exportin-T (LOS1).